We begin with the raw amino-acid sequence, 495 residues long: Acetyl-coenzyme A carboxylase carboxyl transferase subunit beta, chloroplastic (495 aa).

The disordered stretch occupies residues 187–208 (ESRNSSENEGSSRRTRTKGSDL). The region spanning 226-495 (LWVQCENCYG…PLNQKSSKIK (270 aa)) is the CoA carboxyltransferase N-terminal domain. Zn(2+)-binding residues include cysteine 230, cysteine 233, cysteine 249, and cysteine 252. The segment at 230 to 252 (CENCYGLNYKKFLKSKMNICEQC) adopts a C4-type zinc-finger fold.

This sequence belongs to the AccD/PCCB family. Acetyl-CoA carboxylase is a heterohexamer composed of biotin carboxyl carrier protein, biotin carboxylase and 2 subunits each of ACCase subunit alpha and ACCase plastid-coded subunit beta (accD). It depends on Zn(2+) as a cofactor. In terms of tissue distribution, RNA expressed in leaf, root and stem; the least expression occurs in stems.

It is found in the plastid. The protein localises to the chloroplast stroma. It catalyses the reaction N(6)-carboxybiotinyl-L-lysyl-[protein] + acetyl-CoA = N(6)-biotinyl-L-lysyl-[protein] + malonyl-CoA. It functions in the pathway lipid metabolism; malonyl-CoA biosynthesis; malonyl-CoA from acetyl-CoA: step 1/1. Component of the acetyl coenzyme A carboxylase (ACC) complex. Biotin carboxylase (BC) catalyzes the carboxylation of biotin on its carrier protein (BCCP) and then the CO(2) group is transferred by the transcarboxylase to acetyl-CoA to form malonyl-CoA. This is Acetyl-coenzyme A carboxylase carboxyl transferase subunit beta, chloroplastic from Nicotiana tabacum (Common tobacco).